A 235-amino-acid chain; its full sequence is Serine protease SplA (235 aa).

The N-terminal stretch at 1 to 35 (MNKNVMIKGLTALTILTSLGFAENISDQPHSIAKA) is a signal peptide. Active-site charge relay system residues include H74, D113, and S189.

The protein belongs to the peptidase S1B family.

It localises to the secreted. In Staphylococcus aureus, this protein is Serine protease SplA (splA).